Here is a 105-residue protein sequence, read N- to C-terminus: uncharacterized protein (105 aa).

Belongs to the baculoviridae 11 kDa protein family.

This is an uncharacterized protein from Autographa californica nuclear polyhedrosis virus (AcMNPV).